Reading from the N-terminus, the 688-residue chain is G protein-coupled receptor kinase 3 (688 aa).

Residues 1-190 form an N-terminal region; it reads MADLEAVLAD…ELNIHLTMND (190 aa). Positions 54 to 175 constitute an RGS domain; it reads TFDKIFNQRI…MESDKFTRFC (122 aa). The Protein kinase domain occupies 191–453; the sequence is FSVHRIIGRG…AQELKTHDFF (263 aa). ATP is bound by residues 197 to 205 and Lys220; that span reads IGRGGFGEV. The Proton acceptor role is filled by Asp317. The region spanning 454–521 is the AGC-kinase C-terminal domain; the sequence is RGIDWQHVYL…VISERWQQEV (68 aa). A PH domain is found at 558 to 652; the sequence is DCIVHGYMLK…WKKELTETFM (95 aa).

Belongs to the protein kinase superfamily. AGC Ser/Thr protein kinase family. GPRK subfamily. As to quaternary structure, interacts with GIT1. In terms of processing, ubiquitinated. Ubiquitous; brain, spleen &gt; heart, lung &gt; kidney.

The protein resides in the postsynapse. The protein localises to the presynapse. The catalysed reaction is [beta-adrenergic receptor] + ATP = [beta-adrenergic receptor]-phosphate + ADP + H(+). Specifically phosphorylates the agonist-occupied form of the beta-adrenergic and closely related receptors. This chain is G protein-coupled receptor kinase 3, found in Bos taurus (Bovine).